A 401-amino-acid polypeptide reads, in one-letter code: Homocitrate synthase (401 aa).

One can recognise a Pyruvate carboxyltransferase domain in the interval 22 to 271 (VRFCDTTLRD…KLPIDLDTTS (250 aa)). Residues 367–401 (TRHKRGLDSRDLPGTSRAGRDAGPRAGTPTREEPV) are disordered.

It belongs to the alpha-IPM synthase/homocitrate synthase family.

It carries out the reaction acetyl-CoA + 2-oxoglutarate + H2O = (2R)-homocitrate + CoA + H(+). In terms of biological role, this protein is a Fe-Mo-cofactor biosynthetic component. The polypeptide is Homocitrate synthase (nifV) (Frankia sp. (strain FaC1)).